The chain runs to 69 residues: U2-agatoxin-Ao1e (69 aa).

The first 20 residues, M1 to A20, serve as a signal peptide directing secretion. Residues V21–R34 constitute a propeptide that is removed on maturation. Disulfide bonds link C37–C53, C44–C58, and C52–C68.

This sequence belongs to the neurotoxin 01 (U2-agtx) family. In terms of tissue distribution, expressed by the venom gland.

It is found in the secreted. Insect active toxin causing rapid but reversible paralysis in crickets. No activity shown in mammals. Does not show effect on mammalian voltage-gated calcium channels. The protein is U2-agatoxin-Ao1e of Agelena orientalis (Funnel-web spider).